Here is a 200-residue protein sequence, read N- to C-terminus: dTTP/UTP pyrophosphatase (200 aa).

The Proton acceptor role is filled by Asp72.

The protein belongs to the Maf family. YhdE subfamily. Requires a divalent metal cation as cofactor.

It localises to the cytoplasm. The enzyme catalyses dTTP + H2O = dTMP + diphosphate + H(+). The catalysed reaction is UTP + H2O = UMP + diphosphate + H(+). Functionally, nucleoside triphosphate pyrophosphatase that hydrolyzes dTTP and UTP. May have a dual role in cell division arrest and in preventing the incorporation of modified nucleotides into cellular nucleic acids. The sequence is that of dTTP/UTP pyrophosphatase from Pseudomonas savastanoi pv. phaseolicola (strain 1448A / Race 6) (Pseudomonas syringae pv. phaseolicola (strain 1448A / Race 6)).